A 714-amino-acid polypeptide reads, in one-letter code: Hormonally up-regulated neu tumor-associated kinase (714 aa).

Low complexity predominate over residues 1 to 15 (MPAAAGDGLLGEPAA). The disordered stretch occupies residues 1-26 (MPAAAGDGLLGEPAAPGGGGGAEDAA). One can recognise a Protein kinase domain in the interval 62–320 (LIGSRKLGEG…IQQALANRWL (259 aa)). Residues 68 to 76 (LGEGSFAKV) and Lys91 each bind ATP. Asp186 functions as the Proton acceptor in the catalytic mechanism. The span at 437 to 461 (KKPKEQEKRGDFLHRPFSKKLDKNL) shows a compositional bias: basic and acidic residues. 3 disordered regions span residues 437–471 (KKPKEQEKRGDFLHRPFSKKLDKNLPSHKQPSGSL), 518–552 (MEFIPVPPPRTPRIVKKPEPHQPGPGSTGIPHKED), and 590–615 (ARRNSSERTLSPGLPSGSMSPLHTPL). Residues 599–611 (LSPGLPSGSMSPL) are compositionally biased toward low complexity.

This sequence belongs to the protein kinase superfamily. CAMK Ser/Thr protein kinase family. SNF1 subfamily.

It carries out the reaction L-seryl-[protein] + ATP = O-phospho-L-seryl-[protein] + ADP + H(+). It catalyses the reaction L-threonyl-[protein] + ATP = O-phospho-L-threonyl-[protein] + ADP + H(+). The protein is Hormonally up-regulated neu tumor-associated kinase (HUNK) of Homo sapiens (Human).